The chain runs to 419 residues: MIIDYLAQQDPEVAGAVAREVERQQHNLELIASENIASRAVMAAQGSVLTNKYAEGYPGKRYYGGCEYVDQAEQIAIDRAKTLFGAAYANVQPHSGSQANMAVYFALLSPGDTGLGMDLAHGGHLTHGSPVSFSGRLFDFKHYGVKKETGTIDYDQVADLAKTHRPKMIIAGASAYPRTLDFEKFAQIAASVEACLVVDMAHIAGLVAAGVHPSPVPHADVVTSTTHKTLRGPRGGLILSARADFGKALNKEIFPGIQGGPLMHVIAAKAVAFGEALTDGFVAYQQQVVKNARALAAHLMEQGIELVSGGTDNHMMLADLRNISVTGKAAETALERAGLTLNKNAVPFDTENPTVTSGVRIGTPVMTTRGMKEPEMAVVAGLIVNVLKNISNDTVIQATRKRVMELCEAFPIYRDNDNG.

(6S)-5,6,7,8-tetrahydrofolate contacts are provided by residues L119 and 123-125 (GHL). Residue K228 is modified to N6-(pyridoxal phosphate)lysine.

It belongs to the SHMT family. In terms of assembly, homodimer. Requires pyridoxal 5'-phosphate as cofactor.

The protein resides in the cytoplasm. The catalysed reaction is (6R)-5,10-methylene-5,6,7,8-tetrahydrofolate + glycine + H2O = (6S)-5,6,7,8-tetrahydrofolate + L-serine. The protein operates within one-carbon metabolism; tetrahydrofolate interconversion. Its pathway is amino-acid biosynthesis; glycine biosynthesis; glycine from L-serine: step 1/1. In terms of biological role, catalyzes the reversible interconversion of serine and glycine with tetrahydrofolate (THF) serving as the one-carbon carrier. This reaction serves as the major source of one-carbon groups required for the biosynthesis of purines, thymidylate, methionine, and other important biomolecules. Also exhibits THF-independent aldolase activity toward beta-hydroxyamino acids, producing glycine and aldehydes, via a retro-aldol mechanism. This Desulfosudis oleivorans (strain DSM 6200 / JCM 39069 / Hxd3) (Desulfococcus oleovorans) protein is Serine hydroxymethyltransferase.